The chain runs to 216 residues: ATP-dependent Clp protease proteolytic subunit (216 aa).

Catalysis depends on Ser-120, which acts as the Nucleophile. His-145 is an active-site residue.

Belongs to the peptidase S14 family. As to quaternary structure, fourteen ClpP subunits assemble into 2 heptameric rings which stack back to back to give a disk-like structure with a central cavity, resembling the structure of eukaryotic proteasomes.

Its subcellular location is the cytoplasm. It catalyses the reaction Hydrolysis of proteins to small peptides in the presence of ATP and magnesium. alpha-casein is the usual test substrate. In the absence of ATP, only oligopeptides shorter than five residues are hydrolyzed (such as succinyl-Leu-Tyr-|-NHMec, and Leu-Tyr-Leu-|-Tyr-Trp, in which cleavage of the -Tyr-|-Leu- and -Tyr-|-Trp bonds also occurs).. In terms of biological role, cleaves peptides in various proteins in a process that requires ATP hydrolysis. Has a chymotrypsin-like activity. Plays a major role in the degradation of misfolded proteins. This is ATP-dependent Clp protease proteolytic subunit from Cupriavidus necator (strain ATCC 17699 / DSM 428 / KCTC 22496 / NCIMB 10442 / H16 / Stanier 337) (Ralstonia eutropha).